The primary structure comprises 295 residues: Xyloglucan endotransglucosylase protein 2 (295 aa).

The first 23 residues, Met1–Gly23, serve as a signal peptide directing secretion. The GH16 domain occupies Ala24 to Tyr222. The active-site Nucleophile is the Glu108. The active-site Proton donor is Glu112. Glu112 contacts xyloglucan. An N-linked (GlcNAc...) asparagine glycan is attached at Asn116. Xyloglucan contacts are provided by residues Gln125–Asn127, Asp135–Glu137, Asp201–Trp202, and Gly206. 2 disulfides stabilise this stretch: Cys230/Cys239 and Cys276/Cys289. A xyloglucan-binding site is contributed by Arg281.

It belongs to the glycosyl hydrolase 16 family. XTH group 1 subfamily. Post-translationally, contains at least one intrachain disulfide bond essential for its enzymatic activity. Expressed in fruit pulp.

The protein resides in the secreted. It localises to the cell wall. It is found in the extracellular space. Its subcellular location is the apoplast. The enzyme catalyses breaks a beta-(1-&gt;4) bond in the backbone of a xyloglucan and transfers the xyloglucanyl segment on to O-4 of the non-reducing terminal glucose residue of an acceptor, which can be a xyloglucan or an oligosaccharide of xyloglucan.. Its function is as follows. Catalyzes xyloglucan endotransglycosylation (XET). Cleaves and religates xyloglucan polymers. Does not catalyze xyloglucan endohydrolysis (XEH). Probably involved in cell wall restructuring during fruit ripening and postharvest fruit softening. The polypeptide is Xyloglucan endotransglucosylase protein 2 (Diospyros kaki (Kaki persimmon)).